Consider the following 534-residue polypeptide: Blue-light-activated protein (534 aa).

In terms of domain architecture, PAS spans 20–93 (GKDIFFAAVE…QSIRDAIAQR (74 aa)). Residue Cys-70 is modified to S-4a-FMN cysteine. In terms of domain architecture, PAC spans 94–148 (NDISAEIINYRKDGSSFWNALFISPVYNDAGDLIYFFASQLDISRRKDAEEALRQ). A Histidine kinase domain is found at 161–390 (GIAHDFNNLL…TLRLYFPVDE (230 aa)). Residue His-164 is modified to Phosphohistidine; by autocatalysis. The Response regulatory domain maps to 411 to 527 (RILIVEDRPD…DLARKVRQVL (117 aa)). Asp-461 bears the 4-aspartylphosphate mark.

Post-translationally, FMN binds covalently to cysteine after exposure to blue light and this bond is spontaneously broken in the dark.

It carries out the reaction ATP + protein L-histidine = ADP + protein N-phospho-L-histidine.. Its function is as follows. Photosensitive kinase and response regulator that is involved in increased bacterial virulence upon exposure to light. The protein is Blue-light-activated protein of Pseudomonas syringae pv. tomato (strain ATCC BAA-871 / DC3000).